We begin with the raw amino-acid sequence, 65 residues long: Putative primary metabolism protein prl65 (65 aa).

Residues M1–T25 are disordered.

Functionally, may play a role in primary metabolism. This chain is Putative primary metabolism protein prl65, found in Schizosaccharomyces pombe (strain 972 / ATCC 24843) (Fission yeast).